We begin with the raw amino-acid sequence, 119 residues long: MSNIRALGAYRNALRATRVAFKTDLPVLMAARTQIKQGFVDNKDLADQEQQHEAIDKMNEVSQFLIKNIVQGEKQEGDKYFLNFHERTELGDNETIKQSKAEMGSLAGARAKKYSNIKK.

The transit peptide at 1 to 14 directs the protein to the mitochondrion; sequence MSNIRALGAYRNAL.

Belongs to the complex I LYR family. MZM1 subfamily. In terms of assembly, interacts with RIP1.

The protein localises to the mitochondrion matrix. Its function is as follows. Assembly factor required for Rieske Fe-S protein RIP1 incorporation into the cytochrome b-c1 (CIII) complex. Functions as a chaperone, binding to this subunit within the mitochondrial matrix and stabilizing it prior to its translocation and insertion into the late CIII dimeric intermediate within the mitochondrial inner membrane. Modulates the mitochondrial matrix zinc pool. The chain is Mitochondrial zinc maintenance protein 1, mitochondrial (MZM1) from Debaryomyces hansenii (strain ATCC 36239 / CBS 767 / BCRC 21394 / JCM 1990 / NBRC 0083 / IGC 2968) (Yeast).